The sequence spans 689 residues: Glycine--tRNA ligase beta subunit (689 aa).

Belongs to the class-II aminoacyl-tRNA synthetase family. As to quaternary structure, tetramer of two alpha and two beta subunits.

It localises to the cytoplasm. It carries out the reaction tRNA(Gly) + glycine + ATP = glycyl-tRNA(Gly) + AMP + diphosphate. The protein is Glycine--tRNA ligase beta subunit of Salmonella agona (strain SL483).